The sequence spans 72 residues: Translation initiation factor IF-1 (72 aa).

The S1-like domain maps to 1-72 (MAKEGAIEVE…TRGRIVYRYK (72 aa)).

Belongs to the IF-1 family. Component of the 30S ribosomal translation pre-initiation complex which assembles on the 30S ribosome in the order IF-2 and IF-3, IF-1 and N-formylmethionyl-tRNA(fMet); mRNA recruitment can occur at any time during PIC assembly.

The protein localises to the cytoplasm. Its function is as follows. One of the essential components for the initiation of protein synthesis. Stabilizes the binding of IF-2 and IF-3 on the 30S subunit to which N-formylmethionyl-tRNA(fMet) subsequently binds. Helps modulate mRNA selection, yielding the 30S pre-initiation complex (PIC). Upon addition of the 50S ribosomal subunit IF-1, IF-2 and IF-3 are released leaving the mature 70S translation initiation complex. The chain is Translation initiation factor IF-1 from Corynebacterium diphtheriae (strain ATCC 700971 / NCTC 13129 / Biotype gravis).